Here is a 216-residue protein sequence, read N- to C-terminus: Uracil-DNA glycosylase (216 aa).

D60 (proton acceptor) is an active-site residue.

The protein belongs to the uracil-DNA glycosylase (UDG) superfamily. UNG family.

The protein localises to the cytoplasm. It catalyses the reaction Hydrolyzes single-stranded DNA or mismatched double-stranded DNA and polynucleotides, releasing free uracil.. Functionally, excises uracil residues from the DNA which can arise as a result of misincorporation of dUMP residues by DNA polymerase or due to deamination of cytosine. This is Uracil-DNA glycosylase from Psychromonas ingrahamii (strain DSM 17664 / CCUG 51855 / 37).